A 159-amino-acid chain; its full sequence is MAALIVSRLARRGWLWKLPLATRREFWSRSRKEKEPVVAETVEEVKKEPVLVCPPLRSRAYTPPSDLQSRLESHIKEVLGSSLPNNWQDISLDDGHMKFRLLAGLADGLGHAVPNSRLHQMCRVRDVLDFYNVPVQDKSKFDELVASNLPPNLKISWSY.

It belongs to the mitochondrion-specific ribosomal protein mL50 family. In terms of assembly, component of the mitochondrial ribosome large subunit (39S) which comprises a 16S rRNA and about 50 distinct proteins.

It localises to the mitochondrion. The chain is Large ribosomal subunit protein mL50 (Mrpl50) from Mus musculus (Mouse).